The chain runs to 291 residues: ATP synthase gamma chain (291 aa).

It belongs to the ATPase gamma chain family. As to quaternary structure, F-type ATPases have 2 components, CF(1) - the catalytic core - and CF(0) - the membrane proton channel. CF(1) has five subunits: alpha(3), beta(3), gamma(1), delta(1), epsilon(1). CF(0) has three main subunits: a, b and c.

It is found in the cell membrane. Its function is as follows. Produces ATP from ADP in the presence of a proton gradient across the membrane. The gamma chain is believed to be important in regulating ATPase activity and the flow of protons through the CF(0) complex. The sequence is that of ATP synthase gamma chain from Streptococcus equinus (Streptococcus bovis).